We begin with the raw amino-acid sequence, 410 residues long: Dipeptidase 1 (410 aa).

The N-terminal stretch at 1 to 16 is a signal peptide; sequence MWTSWWLWPLVAVCTA. Residues His36 and Asp38 each coordinate Zn(2+). A glycan (N-linked (GlcNAc...) asparagine) is linked at Asn57. Cys87 and Cys170 form a disulfide bridge. Glu141 serves as a coordination point for Zn(2+). His168 lines the substrate pocket. Zn(2+)-binding residues include His214 and His235. Cysteines 242 and 274 form a disulfide. Substrate is bound by residues Arg246 and Asp304. The GPI-anchor amidated serine moiety is linked to residue Ser384. Residues 385-410 constitute a propeptide, removed in mature form; sequence EAPSLHRRPGALLASLSLLLLSLGLL.

It belongs to the metallo-dependent hydrolases superfamily. Peptidase M19 family. As to quaternary structure, homodimer; disulfide-linked. The cofactor is Zn(2+).

It is found in the apical cell membrane. The protein localises to the cell projection. Its subcellular location is the microvillus membrane. It carries out the reaction an L-aminoacyl-L-amino acid + H2O = 2 an L-alpha-amino acid. The enzyme catalyses leukotriene D4 + H2O = leukotriene E4 + glycine. It catalyses the reaction L-cystine-bis-glycine + 2 H2O = L-cystine + 2 glycine. The catalysed reaction is a beta-lactam + H2O = a substituted beta-amino acid. It carries out the reaction glycyldehydrophenylalanine + H2O = 2,3-didehydrophenylalanine + glycine. With respect to regulation, inhibited by L-penicillamine. Beta-lactamase activity is inhibited by cilastatin. Hydrolyzes a wide range of dipeptides including the conversion of leukotriene D4 to leukotriene E4. Hydrolyzes cystinyl-bis-glycine (cys-bis-gly) formed during glutathione degradation. Also possesses beta lactamase activity and hydrolytically inactivates beta-lactam antibiotics. In terms of biological role, independently of its dipeptidase activity, acts as an adhesion receptor for neutrophil recruitment from bloodstream into inflamed lungs and liver. The polypeptide is Dipeptidase 1 (DPEP1) (Oryctolagus cuniculus (Rabbit)).